The following is a 268-amino-acid chain: Tryptophan synthase alpha chain (268 aa).

Residues glutamate 49 and aspartate 60 each act as proton acceptor in the active site.

This sequence belongs to the TrpA family. In terms of assembly, tetramer of two alpha and two beta chains.

The enzyme catalyses (1S,2R)-1-C-(indol-3-yl)glycerol 3-phosphate + L-serine = D-glyceraldehyde 3-phosphate + L-tryptophan + H2O. It functions in the pathway amino-acid biosynthesis; L-tryptophan biosynthesis; L-tryptophan from chorismate: step 5/5. Functionally, the alpha subunit is responsible for the aldol cleavage of indoleglycerol phosphate to indole and glyceraldehyde 3-phosphate. This chain is Tryptophan synthase alpha chain, found in Shigella boydii serotype 18 (strain CDC 3083-94 / BS512).